Consider the following 616-residue polypeptide: Zinc metalloproteinase-disintegrin-like protein H3 (616 aa).

A signal peptide spans 1–20 (MIQVLLVIICLAVFPYQGSS). Residues 21–193 (IILESGNVND…KKASQLNLTP (173 aa)) constitute a propeptide that is removed on maturation. A Pyrrolidone carboxylic acid (Glu) modification is found at Glu-194. The Peptidase M12B domain maps to 203 to 399 (KYIKLVIVAD…KMPQCILNKP (197 aa)). 3 disulfide bridges follow: Cys-314–Cys-394, Cys-354–Cys-378, and Cys-356–Cys-361. Residue His-339 participates in Zn(2+) binding. The Metal-binding signature appears at 339 to 350 (HEMGHNLGMDHD). Glu-340 acts as the Proton acceptor in catalysis. Residues His-343 and His-349 each contribute to the Zn(2+) site. Asn-377 carries N-linked (GlcNAc...) asparagine glycosylation. Residues 407–493 (PAVCGNYLVE…ECPTDQFQRN (87 aa)) enclose the Disintegrin domain. Ca(2+)-binding residues include Val-409, Asn-412, Glu-416, Glu-419, and Asp-422. 14 disulfides stabilise this stretch: Cys-410-Cys-439, Cys-421-Cys-434, Cys-423-Cys-429, Cys-433-Cys-456, Cys-447-Cys-453, Cys-452-Cys-478, Cys-465-Cys-485, Cys-472-Cys-504, Cys-497-Cys-509, Cys-516-Cys-566, Cys-531-Cys-577, Cys-544-Cys-554, Cys-561-Cys-603, and Cys-597-Cys-609. Residues 471–473 (ECD) carry the D/ECD-tripeptide motif. Ca(2+) contacts are provided by Asp-473, Asp-476, and Asp-488. The N-linked (GlcNAc...) asparagine glycan is linked to Asn-506.

This sequence belongs to the venom metalloproteinase (M12B) family. P-III subfamily. P-IIIc sub-subfamily. In terms of assembly, homodimer; disulfide-linked. It depends on Zn(2+) as a cofactor. Post-translationally, N-glycosylated. The N-terminus is blocked. Expressed by the venom gland (at protein level). Expressed by the venom gland.

Its subcellular location is the secreted. Its activity is regulated as follows. The proteolytic activity requires Zn(2+) and Ca(2+) ions. The alpha-fibrinogenase activity is completely inhibited by EDTA, but not by PMSF. Zinc metalloprotease that has fibrinogenolytic and hemorrhagic activities. Cleaves insulin B chain readily at '38-Ala-|-Leu-39' bond, and at a significantly slower rate, at '40-Tyr-|-Leu-41' bond. Hydrolyzes isolated extracellular matrix (ECM) bovine fibronectin, and basal membrane (BM) proteins human collagen IV and, to a lesser extent, murine laminin, in vitro. Cleaves murine nidogen (at '350-Ser-|-Phe-351' and '380-Tyr-|-Asn-381' bonds), but not laminin, in a solubilized BM preparation. Hydrolyzes plasma proteins involved in blood coagulation in vitro. It significantly prolongs thrombin time. Has potent alpha-fibrinogenase activity cleaving human fibrinogen alpha chain at '432-Lys-|-Leu-433' bond, but does not cleave beta or gamma chains. Hydrolyzes bovine prothrombin, but does not cleave it at '366-Arg-|-Ile-367' bond, which is necessary for the formation of active alpha-thrombin, however, the cleavage of fragment 1 from it leads to reduced alpha-thrombin formation. Hydrolyzes bovine factor X heavy chain at '211-Ser-|-Leu-212', '213-Asp-|-Leu-214' and '216-Gly-|-Leu-217' bonds activating it only marginally as does not cleave at the physiological activation site. Does not cleave factor X light chain. No hydrolysis or activation of plasminogen. The alpha-fibrinogenase activity likely contributes to its hemorrhagic activity, which in rat can be completely neutralized in vivo by anti-ammodytagin antibodies, which strongly cross-react with this protein. Has very weak collagen-, ADP- and ristocetin-induced platelet aggregation inhibition activity in vitro. In Vipera ammodytes ammodytes (Western sand viper), this protein is Zinc metalloproteinase-disintegrin-like protein H3.